Consider the following 198-residue polypeptide: Inner membrane-spanning protein YciB (198 aa).

The next 5 membrane-spanning stretches (helical) occupy residues Ile-36–Ile-56, Leu-67–Phe-87, Trp-90–Gly-110, Ile-135–Phe-155, and Phe-162–Leu-182.

Belongs to the YciB family.

Its subcellular location is the cell inner membrane. Its function is as follows. Plays a role in cell envelope biogenesis, maintenance of cell envelope integrity and membrane homeostasis. The sequence is that of Inner membrane-spanning protein YciB from Pseudomonas fluorescens (strain Pf0-1).